Here is a 304-residue protein sequence, read N- to C-terminus: Bifunctional phosphoglucose/phosphomannose isomerase (304 aa).

The SIS domain maps to 16–147 (FDKSFKVGKY…KPKIGDVDEA (132 aa)). Residues Gly-35, Ser-36, Ser-74, Ser-76, Thr-79, and Arg-122 each contribute to the D-fructose 6-phosphate site. Glu-196 (proton acceptor) is an active-site residue. Residues His-212 and Lys-300 each contribute to the D-fructose 6-phosphate site. His-212 (proton donor) is an active-site residue. Catalysis depends on Lys-300, which acts as the Proton acceptor.

The protein belongs to the PGI/PMI family. Homodimer.

It catalyses the reaction alpha-D-glucose 6-phosphate = beta-D-fructose 6-phosphate. It carries out the reaction D-mannose 6-phosphate = D-fructose 6-phosphate. Its function is as follows. Dual specificity isomerase that catalyzes the isomerization of both glucose-6-phosphate and mannose-6-phosphate to fructose-6-phosphate. In Thermoplasma volcanium (strain ATCC 51530 / DSM 4299 / JCM 9571 / NBRC 15438 / GSS1), this protein is Bifunctional phosphoglucose/phosphomannose isomerase.